Reading from the N-terminus, the 150-residue chain is Large ribosomal subunit protein bL9 (150 aa).

Belongs to the bacterial ribosomal protein bL9 family.

In terms of biological role, binds to the 23S rRNA. The sequence is that of Large ribosomal subunit protein bL9 from Shewanella baltica (strain OS223).